The following is a 340-amino-acid chain: MLHTIGILIWIIIKILVIVVPLLLSVAYLTYAERKVIGYIQVRIGPNRVGLKGLLQPFADLLKLITKEIIVPTRSNKYLFVIAPLFALVPSLVGWAVIPFQEGVVLANINAGVLYLFAMSSLGVYGVLIAGWASNSKYAMFGALRSTAQTVSYEIAMGFALVGVLLAAGSMNLTDIVNSQKGGMLHWWFIPLLPLFLVFWIAGIAETNRAPFDLAEGESEIVAGFHVEYSGIGFALFFLSEYASMILISTFMAILFMGGWLSPFEGITFLDQIFFVVPGFVWLLLKISFFLFVYLWVRATFPRYRYDQLMRLGWKVLIPVTIVWLVVTSLMVVAHVKPWF.

Transmembrane regions (helical) follow at residues 4 to 24, 78 to 98, 113 to 133, 151 to 171, 184 to 204, 244 to 264, 273 to 293, and 316 to 336; these read TIGI…PLLL, YLFV…WAVI, VLYL…AGWA, VSYE…AGSM, MLHW…IAGI, SMIL…LSPF, IFFV…FLFV, and VLIP…VAHV.

Belongs to the complex I subunit 1 family. In terms of assembly, NDH-1 is composed of 14 different subunits. Subunits NuoA, H, J, K, L, M, N constitute the membrane sector of the complex.

The protein resides in the cell inner membrane. The enzyme catalyses a quinone + NADH + 5 H(+)(in) = a quinol + NAD(+) + 4 H(+)(out). Its function is as follows. NDH-1 shuttles electrons from NADH, via FMN and iron-sulfur (Fe-S) centers, to quinones in the respiratory chain. The immediate electron acceptor for the enzyme in this species is believed to be ubiquinone. Couples the redox reaction to proton translocation (for every two electrons transferred, four hydrogen ions are translocated across the cytoplasmic membrane), and thus conserves the redox energy in a proton gradient. This subunit may bind ubiquinone. This chain is NADH-quinone oxidoreductase subunit H, found in Legionella pneumophila (strain Paris).